The following is a 344-amino-acid chain: MTDKTILRALKGEVLPTPPVWLMRQAGRYLPEYRATRAQAGDFLSLCYTPDLAAEVTLQPIRRYGFDAAILFADILLLPQALGLDLWFETGEGPRMSTVTSMEGVKGLKGKDDIHDKLAPVYETCKILSRELPKETTFIGFAGMPWTVATYMIAGRGSKDQAAAHKFKDTDRAAFSALIDAVTVATIEYLSKQVEAGCEVVKLFDSWAGSLKGQDFEDFAVEPARVITAEMKRRFPGLPVIAFPREAGQGYIGFAEKTGADCVAIDNSVSPDWAAENVQKGKTCVQGNLDPSYMVTGGQELVEATKKVVAAFKNGPHIFNLGHGITPEANPDNVTLLMETIRKG.

Substrate contacts are provided by residues 24-28, Phe43, Asp74, Tyr151, Ser206, and His323; that span reads RQAGR.

Belongs to the uroporphyrinogen decarboxylase family. Homodimer.

The protein localises to the cytoplasm. It carries out the reaction uroporphyrinogen III + 4 H(+) = coproporphyrinogen III + 4 CO2. Its pathway is porphyrin-containing compound metabolism; protoporphyrin-IX biosynthesis; coproporphyrinogen-III from 5-aminolevulinate: step 4/4. Catalyzes the decarboxylation of four acetate groups of uroporphyrinogen-III to yield coproporphyrinogen-III. The polypeptide is Uroporphyrinogen decarboxylase (Rhodobacter capsulatus (Rhodopseudomonas capsulata)).